Here is a 963-residue protein sequence, read N- to C-terminus: Vacuolar membrane protease (963 aa).

At 1 to 15 (MVSSRRGFNPIAFTP) the chain is on the cytoplasmic side. Residues 16–36 (WPVTILTSLVYLALIIPIIVV) traverse the membrane as a helical segment. Residues 37-391 (HHLVPPAPKQ…FQLNTLFGLS (355 aa)) lie on the Vacuolar side of the membrane. Residues Asn-111 and Asn-114 are each glycosylated (N-linked (GlcNAc...) asparagine). Zn(2+) is bound by residues His-170 and Asp-182. The active-site Proton acceptor is the Glu-216. Zn(2+) is bound by residues Glu-217, Glu-242, and His-315. The helical transmembrane segment at 392-412 (VALLVVAPLLLILTSVALFAV) threads the bilayer. The Cytoplasmic segment spans residues 413 to 441 (DKMYMFSMYTYLSESGGQVSLYGLRGMFR). A helical transmembrane segment spans residues 442 to 462 (FPLILGISTALTVALAFLIMK). Residues 463–473 (VNPFIIYSSPY) are Vacuolar-facing. A helical transmembrane segment spans residues 474 to 494 (AVWSMMLSTCMFFAWFISCVA). Topologically, residues 495–504 (DFARPSALHR) are cytoplasmic. The chain crosses the membrane as a helical span at residues 505–525 (AYAFSWMFGILWVFLVIATVY). The Vacuolar segment spans residues 526 to 535 (QRQHGIASSY). Residues 536 to 556 (FIVFYFAGVSVATWISYLELF) form a helical membrane-spanning segment. Topologically, residues 557 to 668 (GLSTTQDYAR…WSIYLVSSAW (112 aa)) are cytoplasmic. Residues 569–618 (SRLSDRTPSSDSHLLAPSADELPSSGSVAGRDFNPEDVEDEEPTESTSLL) form a disordered region. Over residues 603–612 (PEDVEDEEPT) the composition is skewed to acidic residues. Residues 669–689 (ILQFLLVAPIVLILLGQLGLF) traverse the membrane as a helical segment. Over 690-705 (LTSATYQIGADGGSQF) the chain is Vacuolar. Residues 706-726 (IIYIGIAVLSVLILLPLFPFI) form a helical membrane-spanning segment. At 727-732 (HRFTYH) the chain is on the cytoplasmic side. A helical transmembrane segment spans residues 733-753 (IPTFMLFVLIGTLVYNLTAFP). Residues 754-963 (FSHNSRLKVA…LVEGSYSFKL (210 aa)) lie on the Vacuolar side of the membrane. Asn-835 is a glycosylation site (N-linked (GlcNAc...) asparagine).

The protein belongs to the peptidase M28 family. Requires Zn(2+) as cofactor.

It is found in the vacuole membrane. Its function is as follows. May be involved in vacuolar sorting and osmoregulation. This is Vacuolar membrane protease from Arthroderma gypseum (strain ATCC MYA-4604 / CBS 118893) (Microsporum gypseum).